Reading from the N-terminus, the 86-residue chain is Ferredoxin YfhL (86 aa).

4Fe-4S ferredoxin-type domains lie at 1 to 29 and 31 to 65; these read MALL…MGDH and YEIN…KDPA. Residues Cys-9, Cys-12, Cys-15, Cys-19, Cys-38, Cys-41, Cys-50, and Cys-54 each contribute to the [4Fe-4S] cluster site.

[4Fe-4S] cluster is required as a cofactor.

In terms of biological role, ferredoxins are iron-sulfur proteins that transfer electrons in a wide variety of metabolic reactions. The sequence is that of Ferredoxin YfhL (yfhL) from Escherichia coli (strain K12).